A 607-amino-acid polypeptide reads, in one-letter code: Granule-bound starch synthase 1, chloroplastic/amyloplastic (607 aa).

Residues 1 to 77 constitute a chloroplast transit peptide; sequence MASITASHHF…RPGCSATIVC (77 aa). Lys-95 provides a ligand contact to ADP-alpha-D-glucose. The disordered stretch occupies residues 585–607; sequence SGSEPGVEGEEIAPLAKENVATP.

This sequence belongs to the glycosyltransferase 1 family. Bacterial/plant glycogen synthase subfamily.

The protein resides in the plastid. It is found in the chloroplast. It localises to the amyloplast. The catalysed reaction is an NDP-alpha-D-glucose + [(1-&gt;4)-alpha-D-glucosyl](n) = [(1-&gt;4)-alpha-D-glucosyl](n+1) + a ribonucleoside 5'-diphosphate + H(+). It participates in glycan biosynthesis; starch biosynthesis. The polypeptide is Granule-bound starch synthase 1, chloroplastic/amyloplastic (WAXY) (Solanum tuberosum (Potato)).